Reading from the N-terminus, the 190-residue chain is MDIKIDISISGDKFTVTTRRENEERKKYLPLQKEKTTDVIKPDYLEYDDLLDRDEMFTILEEYFMYRGLLGLRIKYGRLFNEIKKFDNDAEEQFGTIEELKQKLRLNSEEGADNFIDYIKVQKQDIVKLTVYDCISMIGLCACVVDVWRNEKLFSRWKYCLRAIKLFINDHMLDKIKSILQNRLVYVEMS.

The protein belongs to the orthopoxvirus A52R protein family. Interacts with host TRAF6 and IRAK2.

Its function is as follows. Bcl-2-like protein which targets host toll-like receptor signaling complexes to suppress innate immune response. Interacts with host TRAF6 to activate p38 and subsequently induce the expression of several cytokines such as IL-10. Also associates with host IRAK2 to inhibit NF-kappa-B signaling. In Vaccinia virus (strain Western Reserve) (VACV), this protein is Protein A52.